Consider the following 192-residue polypeptide: Pyridoxal 5'-phosphate synthase subunit PdxT (192 aa).

53–55 (GES) is an L-glutamine binding site. The Nucleophile role is filled by cysteine 82. L-glutamine is bound by residues arginine 109 and 137-138 (IR). Catalysis depends on charge relay system residues histidine 173 and glutamate 175.

The protein belongs to the glutaminase PdxT/SNO family. In terms of assembly, in the presence of PdxS, forms a dodecamer of heterodimers. Only shows activity in the heterodimer.

It carries out the reaction aldehydo-D-ribose 5-phosphate + D-glyceraldehyde 3-phosphate + L-glutamine = pyridoxal 5'-phosphate + L-glutamate + phosphate + 3 H2O + H(+). The enzyme catalyses L-glutamine + H2O = L-glutamate + NH4(+). The protein operates within cofactor biosynthesis; pyridoxal 5'-phosphate biosynthesis. In terms of biological role, catalyzes the hydrolysis of glutamine to glutamate and ammonia as part of the biosynthesis of pyridoxal 5'-phosphate. The resulting ammonia molecule is channeled to the active site of PdxS. The chain is Pyridoxal 5'-phosphate synthase subunit PdxT from Methanoculleus marisnigri (strain ATCC 35101 / DSM 1498 / JR1).